Consider the following 281-residue polypeptide: Transmembrane protein 41A-A (281 aa).

The signal sequence occupies residues Met1–Ser22. The interval His32–Ser56 is disordered. Residues Gln34 to Asp47 are compositionally biased toward basic and acidic residues. Transmembrane regions (helical) follow at residues Gly84–Gly104, Phe107–Val127, Leu170–Met190, Ile197–Cys217, and Trp236–Ile256.

The protein belongs to the TMEM41 family.

It is found in the membrane. This is Transmembrane protein 41A-A (tmem41aa) from Danio rerio (Zebrafish).